The chain runs to 377 residues: Nitric oxide reductase FlRd-NAD(+) reductase (377 aa).

The protein belongs to the FAD-dependent oxidoreductase family. The cofactor is FAD.

It localises to the cytoplasm. It carries out the reaction 2 reduced [nitric oxide reductase rubredoxin domain] + NAD(+) + H(+) = 2 oxidized [nitric oxide reductase rubredoxin domain] + NADH. It functions in the pathway nitrogen metabolism; nitric oxide reduction. Functionally, one of at least two accessory proteins for anaerobic nitric oxide (NO) reductase. Reduces the rubredoxin moiety of NO reductase. This Escherichia coli O7:K1 (strain IAI39 / ExPEC) protein is Nitric oxide reductase FlRd-NAD(+) reductase.